The chain runs to 292 residues: AKT-interacting protein (292 aa).

Over residues 1–11 the composition is skewed to polar residues; that stretch reads MNPFWSMSTSS. Residues 1–63 form a disordered region; it reads MNPFWSMSTS…TSPAPAAQST (63 aa). The span at 14-23 shows a compositional bias: basic and acidic residues; sequence KRSEGEEKTL. S30 carries the post-translational modification Phosphoserine. Positions 74-222 constitute a UBC core domain; that stretch reads YLEYSLLAEF…VVDSVKVCTA (149 aa).

It belongs to the ubiquitin-conjugating enzyme family. FTS subfamily. As to quaternary structure, component of the FTS/Hook/FHIP complex (FHF complex), composed of AKTIP/FTS, FHIP1B, and one or more members of the Hook family of proteins HOOK1, HOOK2, and HOOK3. Interacts directly with HOOK1, HOOK2 and HOOK3. The FHF complex associates with the homotypic vesicular sorting complex (the HOPS complex). Also interacts with AKT1. May interact with FHIP1A.

The protein localises to the cytoplasm. It localises to the cell membrane. Component of the FTS/Hook/FHIP complex (FHF complex). The FHF complex may function to promote vesicle trafficking and/or fusion via the homotypic vesicular protein sorting complex (the HOPS complex). Regulates apoptosis by enhancing phosphorylation and activation of AKT1. Increases release of TNFSF6 via the AKT1/GSK3B/NFATC1 signaling cascade. FHF complex promotes the distribution of AP-4 complex to the perinuclear area of the cell. The sequence is that of AKT-interacting protein from Homo sapiens (Human).